The primary structure comprises 536 residues: Probable E3 ubiquitin-protein ligase ARI13 (536 aa).

Residues lysine 83–methionine 328 form a TRIAD supradomain region. Zn(2+)-binding residues include cysteine 87, cysteine 90, cysteine 106, histidine 108, cysteine 111, cysteine 114, cysteine 135, cysteine 140, cysteine 180, cysteine 185, cysteine 210, cysteine 212, cysteine 217, cysteine 220, histidine 225, cysteine 230, cysteine 277, cysteine 280, cysteine 297, cysteine 299, cysteine 304, cysteine 307, histidine 314, and cysteine 324. The RING-type 1 zinc-finger motif lies at cysteine 87–cysteine 140. Residues glutamate 158 to cysteine 230 form an IBR-type zinc finger. The RING-type 2; atypical zinc-finger motif lies at cysteine 277–cysteine 307. The RanBP2-type zinc-finger motif lies at aspartate 495–alanine 526.

Belongs to the RBR family. Ariadne subfamily. The cofactor is Zn(2+).

It catalyses the reaction [E2 ubiquitin-conjugating enzyme]-S-ubiquitinyl-L-cysteine + [acceptor protein]-L-lysine = [E2 ubiquitin-conjugating enzyme]-L-cysteine + [acceptor protein]-N(6)-ubiquitinyl-L-lysine.. The protein operates within protein modification; protein ubiquitination. In terms of biological role, might act as an E3 ubiquitin-protein ligase, or as part of E3 complex, which accepts ubiquitin from specific E2 ubiquitin-conjugating enzymes and then transfers it to substrates. In Arabidopsis thaliana (Mouse-ear cress), this protein is Probable E3 ubiquitin-protein ligase ARI13 (ARI13).